Reading from the N-terminus, the 570-residue chain is MALILERLYLLSSPRNAIIRNTRSEAGRELIFSFGLPSLSLPSCIASQYGKRRRLYFTTQLHVNSFLHWTCDANDAVNITLVQPDEQKLKTVSSFHPQFTYPIFGDDERIFGYKGLIIRLRFAAHDLRPQLHISYDEKFKPVEDIAAVDIPKTLKPWIPEDAFVTLPDYEKAVLEDKAAKDFKPPGKLVHCYVSRNRNFEIWAGSLADPEVRRLLDRAQIFVSLFIEAGTPLATDDPEWTLQRWTVYFVYEIVKPPTPTASKYSIVGYATTYRWWHYRRDRTQVPVVKNDPFPSGPEIHPSQLPSRLRIAQFLILPPHQNSGHGRHLYTAIHSACVQDPSVVELTVEDPNEAFDVLRDSADYHILRPEFIKHEVNINPDPYEAHSRNQRPRRVPTAALIPVKLLHDIRTSYKIDSTQFAHILEMFLLSQIPLKNRHAGGANMSRLLIKKHRAEDPNERRYYWWRMLTKQRLYKRSKDILIQLDLDERIQKLEETVSNVEEGYEVLLKEFSEREEKLKARGVVESPAATVSDDASAGPSGTSRDQRVKRKFTVEDDEDKVEEEDTAKRTKV.

Interaction with histone H4 N-terminus regions lie at residues 106–108 (DDE) and 272–274 (YRW). Acetyl-CoA-binding positions include 312 to 314 (FLI) and 319 to 325 (QNSGHGR). Glu347 (proton donor/acceptor) is an active-site residue. A disordered region spans residues 522-570 (VESPAATVSDDASAGPSGTSRDQRVKRKFTVEDDEDKVEEEDTAKRTKV). Residues 553-563 (EDDEDKVEEED) show a composition bias toward acidic residues.

It belongs to the HAT1 family. In terms of assembly, component of the HAT-B complex composed of at least hat1 and hat2. The HAT-B complex binds to histone H4 tail.

It is found in the cytoplasm. Its subcellular location is the nucleus. It carries out the reaction L-lysyl-[protein] + acetyl-CoA = N(6)-acetyl-L-lysyl-[protein] + CoA + H(+). In terms of biological role, catalytic component of the histone acetylase B (HAT-B) complex. Acetylates 'Lys-12' of histone H4 which is required for telomeric silencing. Has intrinsic substrate specificity that modifies lysine in recognition sequence GXGKXG. Involved in DNA double-strand break repair. The sequence is that of Histone acetyltransferase type B catalytic subunit (hat1) from Aspergillus fumigatus (strain ATCC MYA-4609 / CBS 101355 / FGSC A1100 / Af293) (Neosartorya fumigata).